We begin with the raw amino-acid sequence, 146 residues long: Large-conductance mechanosensitive channel (146 aa).

3 consecutive transmembrane segments (helical) span residues 21-41, 44-64, and 83-103; these read VGII…ADLI, VIGL…LGDG, and GAFI…FLLV.

This sequence belongs to the MscL family. As to quaternary structure, homopentamer.

It localises to the cell inner membrane. Its function is as follows. Channel that opens in response to stretch forces in the membrane lipid bilayer. May participate in the regulation of osmotic pressure changes within the cell. The chain is Large-conductance mechanosensitive channel from Cereibacter sphaeroides (strain ATCC 17025 / ATH 2.4.3) (Rhodobacter sphaeroides).